Consider the following 576-residue polypeptide: Putative export ATP-binding/permease protein RF_0214 (576 aa).

Positions 20-303 (LIIVMISLLS…IFELLSEIHL (284 aa)) constitute an ABC transmembrane type-1 domain. 6 helical membrane-spanning segments follow: residues 21-41 (IIVMISLLSVSASLLLIGSVF), 61-81 (ILYICLLIIILSIASFFRSYF), 135-155 (FLSFFIRNSVMLIGGVTLMFF), 158-178 (FKLASIVIITIPILLIPLIKF), 242-262 (ALFFAISIAIIFLAITLVVWI), and 277-297 (IISFIYYAIIAGFSSGGIFEL). The ABC transporter domain maps to 336–572 (IEFKNVDFTY…SEIYRNICRE (237 aa)). Residue 371-378 (GRSGGGKS) coordinates ATP.

The protein belongs to the ABC transporter superfamily. As to quaternary structure, homodimer.

The protein resides in the cell inner membrane. In terms of biological role, part of an ABC transporter complex. Transmembrane domains (TMD) form a pore in the inner membrane and the ATP-binding domain (NBD) is responsible for energy generation. The polypeptide is Putative export ATP-binding/permease protein RF_0214 (Rickettsia felis (strain ATCC VR-1525 / URRWXCal2) (Rickettsia azadi)).